A 525-amino-acid polypeptide reads, in one-letter code: GMP synthase [glutamine-hydrolyzing] (525 aa).

Residues 8-207 enclose the Glutamine amidotransferase type-1 domain; that stretch reads KILILDFGSQ…ALDICQCEAN (200 aa). The Nucleophile role is filled by Cys85. Catalysis depends on residues His181 and Glu183. The GMPS ATP-PPase domain occupies 208-400; that stretch reads WKPSSIIEDA…LGLPYNMLYR (193 aa). 235 to 241 contributes to the ATP binding site; that stretch reads SGGVDSS.

Homodimer.

It carries out the reaction XMP + L-glutamine + ATP + H2O = GMP + L-glutamate + AMP + diphosphate + 2 H(+). It functions in the pathway purine metabolism; GMP biosynthesis; GMP from XMP (L-Gln route): step 1/1. Functionally, catalyzes the synthesis of GMP from XMP. This Shewanella loihica (strain ATCC BAA-1088 / PV-4) protein is GMP synthase [glutamine-hydrolyzing].